The following is a 419-amino-acid chain: Tyrosine--tRNA ligase 2 (419 aa).

Tyrosine 34 contributes to the L-tyrosine binding site. A 'HIGH' region motif is present at residues 39–48 (PTGDSMHIGH). Residues tyrosine 168 and glutamine 172 each contribute to the L-tyrosine site. The 'KMSKS' region signature appears at 230–234 (KFGKS). Position 233 (lysine 233) interacts with ATP. Residues 352 to 418 (KNIVEWLVDL…GKKNYSLVKL (67 aa)) form the S4 RNA-binding domain.

The protein belongs to the class-I aminoacyl-tRNA synthetase family. TyrS type 1 subfamily. Homodimer.

Its subcellular location is the cytoplasm. It carries out the reaction tRNA(Tyr) + L-tyrosine + ATP = L-tyrosyl-tRNA(Tyr) + AMP + diphosphate + H(+). Catalyzes the attachment of tyrosine to tRNA(Tyr) in a two-step reaction: tyrosine is first activated by ATP to form Tyr-AMP and then transferred to the acceptor end of tRNA(Tyr). The protein is Tyrosine--tRNA ligase 2 of Bacillus anthracis.